Consider the following 1170-residue polypeptide: Short transient receptor potential channel 2 (1170 aa).

Residues 1 to 627 (MLMSLTDSKE…GWRGSTTIWK (627 aa)) lie on the Cytoplasmic side of the membrane. Disordered regions lie at residues 64 to 113 (SLSD…QTST), 142 to 231 (AHKA…QATG), and 322 to 342 (ESGS…VEES). Polar residues predominate over residues 74-85 (SPGSSGLNQNSS). Residues 158 to 177 (GEPDSSHPERAEPRAEEPNR) are compositionally biased toward basic and acidic residues. ANK repeat units follow at residues 300-329 (KFPP…DPSG), 346-376 (SWRE…DFRQ), 377-405 (IHEA…REKG), and 429-458 (PGVT…TIAR). The chain crosses the membrane as a helical span at residues 628–648 (LFVAFLIFLTMPFLCIGYWLA). The Extracellular portion of the chain corresponds to 649 to 658 (PKSRLGRLLK). The helical transmembrane segment at 659-679 (IPVLKFLLHSASYLWFLIFLL) threads the bilayer. Over 680 to 701 (GESLVMETQLSTFKGRSQSVWE) the chain is Cytoplasmic. A helical transmembrane segment spans residues 702–722 (TSLHMIWVTGFLWFECKEVWI). Residues 723–737 (EGLRSYLLDWWNFLD) are Extracellular-facing. Residues 738 to 758 (VVILSLYLASFALRLLLAGLA) traverse the membrane as a helical segment. Residues 759 to 788 (YMHCRDASDSSTCRYFTTAERSEWRTEDPQ) are Cytoplasmic-facing. Residues 789–809 (FLAEVLFAVTSMLSFTRLAYI) traverse the membrane as a helical segment. The Extracellular portion of the chain corresponds to 810-832 (LPAHESLGTLQISIGKMIDDMIR). A helical transmembrane segment spans residues 833 to 853 (FMFILMIILTAFLCGLNNIYV). Over 854–898 (PYQETEKLGNFNETFQFLFWTMFGMEEHSVVDMPQFLVPEFVGRA) the chain is Cytoplasmic. A helical membrane pass occupies residues 899 to 919 (MYGIFTIVMVIVLLNMLIAMI). Residues 920 to 1170 (TNSFQKIEDD…GEDLETKGES (251 aa)) are Extracellular-facing. Residues 1030–1068 (RREFEETRRKDLGNRLTELTKTVSRLQSEVASVQKTVAA) adopt a coiled-coil conformation. The segment at 1118–1170 (LEDSLDATGEAGTPASGESSSSSSAHVLVHREQEAEGAGDLPLGEDLETKGES) is disordered.

The protein belongs to the transient receptor (TC 1.A.4) family. STrpC subfamily. TRPC2 sub-subfamily. As to expression, expressed exclusively in vomeronasal organ neurons (sensory microvilli).

The protein resides in the membrane. Its function is as follows. Thought to form a receptor-activated calcium permeant cation channel. Probably is operated by a phosphatidylinositol second messenger system activated by receptor tyrosine kinases or G-protein coupled receptors. Is not activated by intracellular calcium store depletion. This Rattus norvegicus (Rat) protein is Short transient receptor potential channel 2 (Trpc2).